Reading from the N-terminus, the 434-residue chain is Sensor histidine kinase Hik2 (434 aa).

The 137-residue stretch at 16–152 (ISLCQSQVRL…EAIAKSLAVA (137 aa)) folds into the GAF domain. Cys-19 serves as a coordination point for [3Fe-4S] cluster. The Histidine kinase domain maps to 182-432 (DLLHQLRNPL…TFTLWLRSGE (251 aa)). His-185 is subject to Phosphohistidine; by autocatalysis. The short motif at 357–361 (DTGYG) is the G1 box element. A G2 box motif is present at residues 386–390 (GTGLG).

It belongs to the chloroplast sensor kinase protein family. Exists as monomers, tetramers, hexamers and other higher-order oligomers; all are able to autophosphorylate. Upon treatment with 0.5 M NaCl only tetramers are seen, which are probably inactive. Interacts with both RppA and Rre1. Requires [3Fe-4S] cluster as cofactor. Post-translationally, autophosphorylates, probably on His-185.

It localises to the cytoplasm. The catalysed reaction is ATP + protein L-histidine = ADP + protein N-phospho-L-histidine.. Its activity is regulated as follows. Autophosphorylation is inhibited by Na(+) but not by Cl(-). Reducing agents dithionite, duroquinol and decyl-plastoquinone, but not NADPH or ferredoxin inhibit autophosphorylation. Oxidation of the Fe-S cluster (with potassium ferricyanide) induces a conformational change that is conducive to its autophosphorylation activity. Functionally, member of possibly 2 two-component regulatory system(s) Hik2/Rre1 and Hik2/RppA. Transduces PQ (plastoquinone) redox signals to photosystem gene expression machinery during the adjustment of photosystem stoichiometry. Reduced PQ suppresses its autophosphorylation activity (i.e. kinase activity is higher under oxidizing conditions). Member of two-component regulatory system Hik2/Rre1, controls expression of sigB (sll0306), sll0528, slr1119, slr0852 and ssr3188 in response to hyperosmotic stress. Activity responds to high salt (with a linear response as concentrations rise to 0.5 M NaCl); detects Cl(-) levels. Autophosphorylates and transfers phosphate to Rre1. May transfer phosphate to RppA in a possible Hik2/RppA two-component system. In Synechocystis sp. (strain ATCC 27184 / PCC 6803 / Kazusa), this protein is Sensor histidine kinase Hik2.